Here is a 622-residue protein sequence, read N- to C-terminus: Probable potassium transport system protein Kup (622 aa).

Helical transmembrane passes span 8 to 28 (LAVL…TSVL), 50 to 70 (ILSI…VSLV), 101 to 121 (VLLL…VITP), 137 to 157 (PTFT…LFAM), 165 to 185 (IGKF…LLGV), 213 to 233 (ITFI…ALYA), 247 to 267 (WFSV…ALLL), 285 to 305 (ALIP…QALI), 337 to 357 (IYMP…VVMF), 366 to 386 (AYGI…FYVI), 393 to 413 (PLAL…AFFA), and 419 to 439 (LFAG…LMIT).

Belongs to the HAK/KUP transporter (TC 2.A.72) family.

The protein localises to the cell inner membrane. The enzyme catalyses K(+)(in) + H(+)(in) = K(+)(out) + H(+)(out). Its function is as follows. Transport of potassium into the cell. Likely operates as a K(+):H(+) symporter. The protein is Probable potassium transport system protein Kup of Polaromonas naphthalenivorans (strain CJ2).